A 248-amino-acid polypeptide reads, in one-letter code: 1-(5-phosphoribosyl)-5-[(5-phosphoribosylamino)methylideneamino] imidazole-4-carboxamide isomerase (248 aa).

D8 serves as the catalytic Proton acceptor. The active-site Proton donor is the D129.

It belongs to the HisA/HisF family.

It is found in the cytoplasm. It carries out the reaction 1-(5-phospho-beta-D-ribosyl)-5-[(5-phospho-beta-D-ribosylamino)methylideneamino]imidazole-4-carboxamide = 5-[(5-phospho-1-deoxy-D-ribulos-1-ylimino)methylamino]-1-(5-phospho-beta-D-ribosyl)imidazole-4-carboxamide. Its pathway is amino-acid biosynthesis; L-histidine biosynthesis; L-histidine from 5-phospho-alpha-D-ribose 1-diphosphate: step 4/9. The polypeptide is 1-(5-phosphoribosyl)-5-[(5-phosphoribosylamino)methylideneamino] imidazole-4-carboxamide isomerase (Rhizobium etli (strain ATCC 51251 / DSM 11541 / JCM 21823 / NBRC 15573 / CFN 42)).